The primary structure comprises 120 residues: Large ribosomal subunit protein uL18 (120 aa).

The protein belongs to the universal ribosomal protein uL18 family. In terms of assembly, part of the 50S ribosomal subunit; part of the 5S rRNA/L5/L18/L25 subcomplex. Contacts the 5S and 23S rRNAs.

Functionally, this is one of the proteins that bind and probably mediate the attachment of the 5S RNA into the large ribosomal subunit, where it forms part of the central protuberance. This is Large ribosomal subunit protein uL18 from Bacillus cereus (strain ATCC 10987 / NRS 248).